Here is a 125-residue protein sequence, read N- to C-terminus: Large ribosomal subunit protein bL12 (125 aa).

This sequence belongs to the bacterial ribosomal protein bL12 family. In terms of assembly, homodimer. Part of the ribosomal stalk of the 50S ribosomal subunit. Forms a multimeric L10(L12)X complex, where L10 forms an elongated spine to which 2 to 4 L12 dimers bind in a sequential fashion. Binds GTP-bound translation factors.

Forms part of the ribosomal stalk which helps the ribosome interact with GTP-bound translation factors. Is thus essential for accurate translation. The sequence is that of Large ribosomal subunit protein bL12 from Liberibacter africanus (Citrus greening disease).